A 994-amino-acid polypeptide reads, in one-letter code: ASI1-immunoprecipitated protein 2 (994 aa).

2 disordered regions span residues A39–N182 and K187–E206. Basic and acidic residues predominate over residues K45–S54. Over residues S60 to N102 the composition is skewed to polar residues. Composition is skewed to basic and acidic residues over residues L119–A140 and K148–N163. The segment at V212–A263 adopts a PHD-type zinc-finger fold. Zn(2+) is bound by residues C215, C218, C230, C233, H239, C242, C257, and C260. Disordered regions lie at residues A342 to G567 and C839 to T875. The segment covering S371–R384 has biased composition (low complexity). Composition is skewed to polar residues over residues V417 to D435 and T449 to I464. Basic and acidic residues-rich tracts occupy residues S469 to S478, P536 to V552, and D858 to T875.

In terms of assembly, component of the ASI1-AIPP1-EDM2 (AAE) RNA regulatory complex composed of at least AIPP1/EDM3, ASI1 and EDM2 and may contain CPL2, AIPP2 and AIPP3/BDT1. Part of the BAH-PHD bivalent histone reader complex that contains AIPP2, PAIPP2 and AIPP3/BDT1; the BAH-PHD module associates with CPL2 to form the BAH-PHD-CPL2 complex (BPC) for transcriptional repression. Binds directly to ASI1, AIPP3/BDT1 and CPL2 but not to PAIPP2. In terms of tissue distribution, expressed ubiquitously.

Its function is as follows. Together with AIPP3/BDT1 and PAIPP2, cooperates to form a BAH-PHD bivalent histone reader complex able to read histone H3 lysine 27 trimethylation (H3K27me3) and low-methylated H3K4 histone marks in order to regulate transcription, especially to prevent early flowering; promotes AIPP3/BDT1 binding to H3K27me3. CPL2 is subsequently recruited to form a BAH-PHD-CPL2 complex (BPC) in order to silence several H3K27me3 and low-methylated H3K4 enriched loci, including AGO5, via the phosphorylation state-dependent inhibition of Pol II release from the transcriptional start site (e.g. Ser5P-Pol II dephosphorylation). The BPC complex represses flowering by inhibiting the expression of several genes, including AGL6, FT, FUL and SOC1. Prevents the accumulation of intronic heterochromatin-containing genes (e.g. IBM1, At3g05410 and RPP7). This chain is ASI1-immunoprecipitated protein 2, found in Arabidopsis thaliana (Mouse-ear cress).